A 397-amino-acid polypeptide reads, in one-letter code: Cercosporin biosynthesis regulatory protein CTB8 (397 aa).

The segment at residues 26–53 (CTHCSSQKIRCTKERPACARCVNKGLLC) is a DNA-binding region (zn(2)-C6 fungal-type). Disordered stretches follow at residues 62–92 (GTRR…DSVK) and 173–198 (AEAS…ATTH). Positions 74-87 (PETTISNAPTSSVP) are enriched in polar residues. Residues 179-197 (PSSSSSPPSQRSDGGRATT) show a composition bias toward low complexity.

Its subcellular location is the nucleus. Transcription regulator of the gene cluster that mediates the biosynthesis of cercosporin, a light-activated, non-host-selective toxin. The perylenequinone chromophore of cercosporin absorbs light energy to attain an electronically-activated triplet state and produces active oxygen species such as the hydroxyl radical, superoxide, hydrogen peroxide or singlet oxygen upon reaction with oxygen molecules. These reactive oxygen species cause damage to various cellular components including lipids, proteins and nucleic acids. The polypeptide is Cercosporin biosynthesis regulatory protein CTB8 (Cercospora nicotianae (Barn spot disease fungus)).